Reading from the N-terminus, the 207-residue chain is Ribonuclease HII (207 aa).

In terms of domain architecture, RNase H type-2 spans 12-201 (DLVAGVDEVG…VRAAWEAREG (190 aa)). A divalent metal cation contacts are provided by Asp18, Glu19, and Asp110.

Belongs to the RNase HII family. It depends on Mn(2+) as a cofactor. Requires Mg(2+) as cofactor.

The protein resides in the cytoplasm. The catalysed reaction is Endonucleolytic cleavage to 5'-phosphomonoester.. Endonuclease that specifically degrades the RNA of RNA-DNA hybrids. The protein is Ribonuclease HII of Pseudomonas putida (strain GB-1).